The sequence spans 227 residues: Ribose-5-phosphate isomerase A (227 aa).

Residues 28–31 (TGST), 85–88 (DGAD), and 98–101 (KGGG) contribute to the substrate site. The Proton acceptor role is filled by Glu107. Residue Lys125 participates in substrate binding.

Belongs to the ribose 5-phosphate isomerase family. In terms of assembly, homodimer.

The catalysed reaction is aldehydo-D-ribose 5-phosphate = D-ribulose 5-phosphate. It functions in the pathway carbohydrate degradation; pentose phosphate pathway; D-ribose 5-phosphate from D-ribulose 5-phosphate (non-oxidative stage): step 1/1. Functionally, catalyzes the reversible conversion of ribose-5-phosphate to ribulose 5-phosphate. This is Ribose-5-phosphate isomerase A from Limosilactobacillus reuteri (strain DSM 20016) (Lactobacillus reuteri).